The sequence spans 122 residues: MLNTLLVVGFGGFIGAILRMFSINLVNKFFPYSISLGTLFVNVLGSFIIGLLFSYAQNKGLSPLLKSFISTGFLGAFTTFSTFSYQNLLLLQSGNYLHFALNIILNVFLCLFAAWLGFIIFK.

The next 4 helical transmembrane spans lie at 6–26, 33–53, 60–80, and 101–121; these read LVVGFGGFIGAILRMFSINLV, SISLGTLFVNVLGSFIIGLLF, GLSPLLKSFISTGFLGAFTTF, and LNIILNVFLCLFAAWLGFIIF. Na(+) contacts are provided by Gly-75 and Thr-78.

The protein belongs to the fluoride channel Fluc/FEX (TC 1.A.43) family.

It localises to the cell inner membrane. It carries out the reaction fluoride(in) = fluoride(out). With respect to regulation, na(+) is not transported, but it plays an essential structural role and its presence is essential for fluoride channel function. Functionally, fluoride-specific ion channel. Important for reducing fluoride concentration in the cell, thus reducing its toxicity. The polypeptide is Fluoride-specific ion channel FluC (Campylobacter jejuni subsp. jejuni serotype O:6 (strain 81116 / NCTC 11828)).